Consider the following 220-residue polypeptide: ATP-dependent dethiobiotin synthetase BioD (220 aa).

11 to 16 serves as a coordination point for ATP; that stretch reads GVGKTF. Residue T15 participates in Mg(2+) binding. K36 is a catalytic residue. Residue T40 coordinates substrate. ATP is bound by residues D48 and 107 to 110; that span reads EGAG. D48 and E107 together coordinate Mg(2+).

It belongs to the dethiobiotin synthetase family. In terms of assembly, homodimer. Mg(2+) serves as cofactor.

The protein localises to the cytoplasm. It carries out the reaction (7R,8S)-7,8-diammoniononanoate + CO2 + ATP = (4R,5S)-dethiobiotin + ADP + phosphate + 3 H(+). Its pathway is cofactor biosynthesis; biotin biosynthesis; biotin from 7,8-diaminononanoate: step 1/2. Catalyzes a mechanistically unusual reaction, the ATP-dependent insertion of CO2 between the N7 and N8 nitrogen atoms of 7,8-diaminopelargonic acid (DAPA, also called 7,8-diammoniononanoate) to form a ureido ring. This chain is ATP-dependent dethiobiotin synthetase BioD, found in Aquifex aeolicus (strain VF5).